Reading from the N-terminus, the 1413-residue chain is DNA-directed RNA polymerase subunit beta' (1413 aa).

4 residues coordinate Zn(2+): Cys-70, Cys-72, Cys-85, and Cys-88. Positions 460, 462, and 464 each coordinate Mg(2+). Zn(2+) contacts are provided by Cys-819, Cys-893, Cys-900, and Cys-903. Residues 1393-1413 (EAFEFGTPETPAAEQTPHTNE) are disordered.

Belongs to the RNA polymerase beta' chain family. As to quaternary structure, the RNAP catalytic core consists of 2 alpha, 1 beta, 1 beta' and 1 omega subunit. When a sigma factor is associated with the core the holoenzyme is formed, which can initiate transcription. Requires Mg(2+) as cofactor. It depends on Zn(2+) as a cofactor.

The enzyme catalyses RNA(n) + a ribonucleoside 5'-triphosphate = RNA(n+1) + diphosphate. DNA-dependent RNA polymerase catalyzes the transcription of DNA into RNA using the four ribonucleoside triphosphates as substrates. This Paraburkholderia phymatum (strain DSM 17167 / CIP 108236 / LMG 21445 / STM815) (Burkholderia phymatum) protein is DNA-directed RNA polymerase subunit beta'.